A 245-amino-acid polypeptide reads, in one-letter code: Outer membrane protein assembly factor BamD (245 aa).

The signal sequence occupies residues 1–19 (MTRMKYLVAAATLSLFLAG). The N-palmitoyl cysteine moiety is linked to residue C20. A lipid anchor (S-diacylglycerol cysteine) is attached at C20.

It belongs to the BamD family. In terms of assembly, part of the Bam complex, which is composed of the outer membrane protein BamA, and four lipoproteins BamB, BamC, BamD and BamE.

It is found in the cell outer membrane. Part of the outer membrane protein assembly complex, which is involved in assembly and insertion of beta-barrel proteins into the outer membrane. Constitutes, with BamA, the core component of the assembly machinery. This chain is Outer membrane protein assembly factor BamD, found in Escherichia coli O157:H7.